The sequence spans 96 residues: 5-hydroxytryptamine receptor 2B (96 aa).

The Extracellular segment spans residues 1-8; the sequence is CNQSTLQM. Residue asparagine 2 is glycosylated (N-linked (GlcNAc...) asparagine). A helical membrane pass occupies residues 9 to 30; it reads LLEIFVWIGYVSSGVNPLVYTL. The NPxxY motif; important for ligand-induced conformation changes and signaling motif lies at 24-28; sequence NPLVY. Residues 31–96 lie on the Cytoplasmic side of the membrane; it reads FNKTFRDAFG…STMYQSPVRL (66 aa). The S-palmitoyl cysteine moiety is linked to residue cysteine 45.

It belongs to the G-protein coupled receptor 1 family. As to quaternary structure, interacts (via C-terminus) with MPDZ.

It is found in the cell membrane. Its subcellular location is the synapse. The protein localises to the synaptosome. Functionally, G-protein coupled receptor for 5-hydroxytryptamine (serotonin). Also functions as a receptor for various ergot alkaloid derivatives and psychoactive substances. Ligand binding causes a conformation change that triggers signaling via guanine nucleotide-binding proteins (G proteins) and modulates the activity of downstream effectors. HTR2B is coupled to G(q)/G(11) G alpha proteins and activates phospholipase C-beta, releasing diacylglycerol (DAG) and inositol 1,4,5-trisphosphate (IP3) second messengers that modulate the activity of phosphatidylinositol 3-kinase and promote the release of Ca(2+) ions from intracellular stores, respectively. Beta-arrestin family members inhibit signaling via G proteins and mediate activation of alternative signaling pathways. Plays a role in the regulation of dopamine and 5-hydroxytryptamine release, 5-hydroxytryptamine uptake and in the regulation of extracellular dopamine and 5-hydroxytryptamine levels, and thereby affects neural activity. May play a role in the perception of pain. Plays a role in the regulation of behavior, including impulsive behavior. Required for normal proliferation of embryonic cardiac myocytes and normal heart development. Protects cardiomyocytes against apoptosis. Plays a role in the adaptation of pulmonary arteries to chronic hypoxia. Plays a role in vasoconstriction. Required for normal osteoblast function and proliferation, and for maintaining normal bone density. Required for normal proliferation of the interstitial cells of Cajal in the intestine. The protein is 5-hydroxytryptamine receptor 2B (HTR2B) of Cavia porcellus (Guinea pig).